We begin with the raw amino-acid sequence, 534 residues long: Serine/threonine-protein kinase Nek6 (534 aa).

Residues 4 to 257 enclose the Protein kinase domain; it reads YEVVEQIGRG…AGELLRHPYL (254 aa). ATP-binding positions include 10–18 and Lys-33; that span reads IGRGAYGSA. Asp-129 serves as the catalytic Proton acceptor. Disordered regions lie at residues 278-306 and 425-449; these read KSNL…SSEA and KAHT…SSPK.

This sequence belongs to the protein kinase superfamily. NEK Ser/Thr protein kinase family. NIMA subfamily. In terms of assembly, interacts with DIS1. Post-translationally, ubiquitinated by the E3 ligase DIS1. Ubiquitination of NEK6 leads to its degradation via the 26S proteasome-dependent pathway. As to expression, expressed in anthers, pistils and leaves.

The protein localises to the cytoplasm. It catalyses the reaction L-seryl-[protein] + ATP = O-phospho-L-seryl-[protein] + ADP + H(+). The enzyme catalyses L-threonyl-[protein] + ATP = O-phospho-L-threonyl-[protein] + ADP + H(+). Functionally, may be involved in plant development processes. The sequence is that of Serine/threonine-protein kinase Nek6 from Oryza sativa subsp. japonica (Rice).